The following is a 463-amino-acid chain: Probable multidrug resistance protein YoeA (463 aa).

Helical transmembrane passes span 24–44, 56–76, 106–126, 143–163, 177–197, 202–222, 256–276, 293–313, 330–350, 370–390, 397–417, and 427–447; these read LFLVPLLLSNVLQSVGQLVGM, VAAVSSFFPLFFLLISFTIGI, FTFLLGVVLAVIGSIFTLDIL, ARILFYAMPFMFLYFAYTTFL, IVSTVINIALLPVLILGMFGF, IYGSAYATVISTIATFLVLMV, VPASINMILVSLSEIAVISFV, VASYVQMPAVSLGIAVSIFAA, VGIWLNYIIGGVLIILIYVFS, LLMITLWSYLLFGNAQIISAT, VLWPTVISIFAIWGVEVPVAF, and ILGVWVGYPAAFAVSLLLIYG.

The protein belongs to the multi antimicrobial extrusion (MATE) (TC 2.A.66.1) family.

It is found in the cell membrane. This Bacillus subtilis (strain 168) protein is Probable multidrug resistance protein YoeA (yoeA).